Reading from the N-terminus, the 402-residue chain is Nicotinate phosphoribosyltransferase (402 aa).

His-224 is modified (phosphohistidine; by autocatalysis).

Belongs to the NAPRTase family. In terms of processing, transiently phosphorylated on a His residue during the reaction cycle. Phosphorylation strongly increases the affinity for substrates and increases the rate of nicotinate D-ribonucleotide production. Dephosphorylation regenerates the low-affinity form of the enzyme, leading to product release.

It catalyses the reaction nicotinate + 5-phospho-alpha-D-ribose 1-diphosphate + ATP + H2O = nicotinate beta-D-ribonucleotide + ADP + phosphate + diphosphate. It participates in cofactor biosynthesis; NAD(+) biosynthesis; nicotinate D-ribonucleotide from nicotinate: step 1/1. Catalyzes the synthesis of beta-nicotinate D-ribonucleotide from nicotinate and 5-phospho-D-ribose 1-phosphate at the expense of ATP. This Neisseria meningitidis serogroup C (strain 053442) protein is Nicotinate phosphoribosyltransferase.